The primary structure comprises 84 residues: Acyl carrier protein (84 aa).

One can recognise a Carrier domain in the interval 4–79 (NEIFEKVQDI…EVVDFIKSKL (76 aa)). O-(pantetheine 4'-phosphoryl)serine is present on S39.

It belongs to the acyl carrier protein (ACP) family. 4'-phosphopantetheine is transferred from CoA to a specific serine of apo-ACP by AcpS. This modification is essential for activity because fatty acids are bound in thioester linkage to the sulfhydryl of the prosthetic group.

It is found in the plastid. The protein resides in the chloroplast. The protein operates within lipid metabolism; fatty acid biosynthesis. Its function is as follows. Carrier of the growing fatty acid chain in fatty acid biosynthesis. This chain is Acyl carrier protein, found in Porphyra purpurea (Red seaweed).